The chain runs to 207 residues: Dephospho-CoA kinase (207 aa).

The DPCK domain maps to 8-207; it reads AIALTGSIGS…LPCVDCVQSS (200 aa). 16 to 21 lines the ATP pocket; that stretch reads GSGKST.

This sequence belongs to the CoaE family.

It localises to the cytoplasm. The catalysed reaction is 3'-dephospho-CoA + ATP = ADP + CoA + H(+). It functions in the pathway cofactor biosynthesis; coenzyme A biosynthesis; CoA from (R)-pantothenate: step 5/5. Catalyzes the phosphorylation of the 3'-hydroxyl group of dephosphocoenzyme A to form coenzyme A. In Helicobacter hepaticus (strain ATCC 51449 / 3B1), this protein is Dephospho-CoA kinase.